Reading from the N-terminus, the 150-residue chain is Large ribosomal subunit protein bL9 (150 aa).

This sequence belongs to the bacterial ribosomal protein bL9 family.

Its function is as follows. Binds to the 23S rRNA. The sequence is that of Large ribosomal subunit protein bL9 from Corynebacterium efficiens (strain DSM 44549 / YS-314 / AJ 12310 / JCM 11189 / NBRC 100395).